The sequence spans 322 residues: NADH oxidoreductase HCR (322 aa).

The region spanning 7 to 107 is the FAD-binding FR-type domain; that stretch reads QCPWRMQVHH…SDAMGEFTCD (101 aa). The segment at 111 to 213 is oxidoreductase; that stretch reads EDKFLLLAAG…APYMDWVEQE (103 aa). Residues 237–322 enclose the 2Fe-2S ferredoxin-type domain; the sequence is SGLKFTKLQP…CHPQGDLVLA (86 aa). [2Fe-2S] cluster contacts are provided by Cys-273, Cys-278, Cys-281, and Cys-311.

The protein in the N-terminal section; belongs to the FAD-binding oxidoreductase type 6 family. [2Fe-2S] cluster serves as cofactor. FAD is required as a cofactor.

In terms of biological role, NADH oxidoreductase acting in concert with HCP. This is NADH oxidoreductase HCR (hcr) from Escherichia coli (strain K12).